The sequence spans 601 residues: ATP-dependent lipid A-core flippase (601 aa).

5 consecutive transmembrane segments (helical) span residues 33–53, 72–92, 158–178, 255–275, and 283–303; these read CVAV…AKLI, VSLM…LSEY, VIGL…VFLV, LGGG…LYVV, and TITP…LSPI. Residues 34 to 315 form the ABC transmembrane type-1 domain; the sequence is VAVVAMIAYA…LSQVVSVMQR (282 aa). Positions 347–583 constitute an ABC transporter domain; the sequence is IEYRHVSLVY…RGGYADLYAM (237 aa). 381–388 contributes to the ATP binding site; sequence GQSGSGKT.

Belongs to the ABC transporter superfamily. Lipid exporter (TC 3.A.1.106) family. Homodimer.

The protein resides in the cell inner membrane. It carries out the reaction ATP + H2O + lipid A-core oligosaccharideSide 1 = ADP + phosphate + lipid A-core oligosaccharideSide 2.. Its function is as follows. Involved in lipopolysaccharide (LPS) biosynthesis. Translocates lipid A-core from the inner to the outer leaflet of the inner membrane. Transmembrane domains (TMD) form a pore in the inner membrane and the ATP-binding domain (NBD) is responsible for energy generation. The polypeptide is ATP-dependent lipid A-core flippase (Methylococcus capsulatus (strain ATCC 33009 / NCIMB 11132 / Bath)).